The chain runs to 387 residues: Galactokinase (387 aa).

36–39 (EHTD) lines the substrate pocket. Residues Ser70 and 125-131 (GAGLSSS) each bind ATP. Mg(2+)-binding residues include Ser131 and Glu163. Catalysis depends on Asp175, which acts as the Proton acceptor. Tyr227 provides a ligand contact to substrate.

Belongs to the GHMP kinase family. GalK subfamily.

It localises to the cytoplasm. The enzyme catalyses alpha-D-galactose + ATP = alpha-D-galactose 1-phosphate + ADP + H(+). It functions in the pathway carbohydrate metabolism; galactose metabolism. Catalyzes the transfer of the gamma-phosphate of ATP to D-galactose to form alpha-D-galactose-1-phosphate (Gal-1-P). This is Galactokinase from Streptomyces coelicolor (strain ATCC BAA-471 / A3(2) / M145).